We begin with the raw amino-acid sequence, 202 residues long: Large ribosomal subunit protein bL17 (202 aa).

The segment covering 130-142 (AAPAATAPAPVEE) has biased composition (low complexity). Residues 130–202 (AAPAATAPAP…TEESTEDDKA (73 aa)) form a disordered region. 2 stretches are compositionally biased toward acidic residues: residues 143-168 (APAEETVAEETAVEEAPTELTDEASP) and 177-202 (QPVEDEAATEEPAAESTEESTEDDKA).

The protein belongs to the bacterial ribosomal protein bL17 family. Part of the 50S ribosomal subunit. Contacts protein L32.

The polypeptide is Large ribosomal subunit protein bL17 (Nocardioides sp. (strain ATCC BAA-499 / JS614)).